The following is a 171-amino-acid chain: 3-hydroxydecanoyl-[acyl-carrier-protein] dehydratase (171 aa).

Residue H70 is part of the active site.

This sequence belongs to the thioester dehydratase family. FabA subfamily. As to quaternary structure, homodimer.

The protein resides in the cytoplasm. The enzyme catalyses a (3R)-hydroxyacyl-[ACP] = a (2E)-enoyl-[ACP] + H2O. The catalysed reaction is (3R)-hydroxydecanoyl-[ACP] = (2E)-decenoyl-[ACP] + H2O. It carries out the reaction (2E)-decenoyl-[ACP] = (3Z)-decenoyl-[ACP]. It participates in lipid metabolism; fatty acid biosynthesis. Functionally, necessary for the introduction of cis unsaturation into fatty acids. Catalyzes the dehydration of (3R)-3-hydroxydecanoyl-ACP to E-(2)-decenoyl-ACP and then its isomerization to Z-(3)-decenoyl-ACP. Can catalyze the dehydratase reaction for beta-hydroxyacyl-ACPs with saturated chain lengths up to 16:0, being most active on intermediate chain length. The polypeptide is 3-hydroxydecanoyl-[acyl-carrier-protein] dehydratase (Ectopseudomonas mendocina (strain ymp) (Pseudomonas mendocina)).